Here is a 104-residue protein sequence, read N- to C-terminus: Flagellar hook-basal body complex protein FliE (104 aa).

It belongs to the FliE family.

It localises to the bacterial flagellum basal body. This is Flagellar hook-basal body complex protein FliE from Salmonella agona (strain SL483).